Reading from the N-terminus, the 76-residue chain is Large ribosomal subunit protein uL29 (76 aa).

The protein belongs to the universal ribosomal protein uL29 family.

This Corynebacterium glutamicum (strain R) protein is Large ribosomal subunit protein uL29.